The sequence spans 418 residues: L-rhamnose isomerase (418 aa).

Residues His-261, Asp-293, and Asp-295 each coordinate Mn(2+).

Belongs to the rhamnose isomerase family. It depends on Mn(2+) as a cofactor.

It localises to the cytoplasm. It carries out the reaction L-rhamnopyranose = L-rhamnulose. Its pathway is carbohydrate degradation; L-rhamnose degradation; glycerone phosphate from L-rhamnose: step 1/3. Its function is as follows. Catalyzes the interconversion of L-rhamnose and L-rhamnulose. This is L-rhamnose isomerase from Clostridium beijerinckii (strain ATCC 51743 / NCIMB 8052) (Clostridium acetobutylicum).